Consider the following 117-residue polypeptide: Holo-[acyl-carrier-protein] synthase (117 aa).

Residues Asp-8 and Glu-58 each coordinate Mg(2+).

It belongs to the P-Pant transferase superfamily. AcpS family. Requires Mg(2+) as cofactor.

The protein resides in the cytoplasm. The enzyme catalyses apo-[ACP] + CoA = holo-[ACP] + adenosine 3',5'-bisphosphate + H(+). Functionally, transfers the 4'-phosphopantetheine moiety from coenzyme A to a Ser of acyl-carrier-protein. The protein is Holo-[acyl-carrier-protein] synthase of Enterococcus faecalis (strain ATCC 700802 / V583).